A 458-amino-acid chain; its full sequence is Tol-Pal system protein TolB (458 aa).

The first 23 residues, 1–23 (MSSVIRKWALTALMAVSSTALFA), serve as a signal peptide directing secretion.

This sequence belongs to the TolB family. The Tol-Pal system is composed of five core proteins: the inner membrane proteins TolA, TolQ and TolR, the periplasmic protein TolB and the outer membrane protein Pal. They form a network linking the inner and outer membranes and the peptidoglycan layer.

The protein localises to the periplasm. Part of the Tol-Pal system, which plays a role in outer membrane invagination during cell division and is important for maintaining outer membrane integrity. The sequence is that of Tol-Pal system protein TolB from Zymomonas mobilis subsp. mobilis (strain ATCC 31821 / ZM4 / CP4).